The primary structure comprises 116 residues: Ribonuclease P protein component (116 aa).

The protein belongs to the RnpA family. Consists of a catalytic RNA component (M1 or rnpB) and a protein subunit.

The enzyme catalyses Endonucleolytic cleavage of RNA, removing 5'-extranucleotides from tRNA precursor.. RNaseP catalyzes the removal of the 5'-leader sequence from pre-tRNA to produce the mature 5'-terminus. It can also cleave other RNA substrates such as 4.5S RNA. The protein component plays an auxiliary but essential role in vivo by binding to the 5'-leader sequence and broadening the substrate specificity of the ribozyme. This chain is Ribonuclease P protein component, found in Exiguobacterium sibiricum (strain DSM 17290 / CCUG 55495 / CIP 109462 / JCM 13490 / 255-15).